A 532-amino-acid chain; its full sequence is Calnexin homolog 2 (532 aa).

An N-terminal signal peptide occupies residues 1 to 25 (MRERIITFVSLLLVALLSFPSVSYC). The Lumenal portion of the chain corresponds to 26-468 (DDQTILYESF…EKAETQPNLT (443 aa)). Ca(2+) contacts are provided by Ser-34 and Asp-65. Cys-110 and Cys-145 form a disulfide bridge. An alpha-D-glucoside contacts are provided by Tyr-114, Lys-116, Tyr-136, and Asp-143. The segment at 208–302 (NLLSAEDFEP…DEEDGEWEAP (95 aa)) is disordered. Positions 225–358 (IPDPEDKKPE…RDIPNPDYFE (134 aa)) are p domain (Extended arm). Residues 226–242 (PDPEDKKPEDWDERAKI) are compositionally biased toward basic and acidic residues. 5 tandem repeats follow at residues 227-238 (DPEDKKPEDWDE), 244-255 (DPNAVKPDDWDE), 263-274 (DEEAEKPEGWLD), 282-293 (DPEASKPEDWDD), and 297-307 (GEWEAPKVSNT). 4 X approximate repeats stretches follow at residues 227-293 (DPED…DWDD) and 297-354 (GEWE…IPNP). Composition is skewed to acidic residues over residues 252–283 (DWDE…VEDP) and 290–299 (DWDDEEDGEW). Cys-309 and Cys-315 are oxidised to a cystine. A run of 3 repeats spans residues 316-326 (GEWKRPMKRNP), 330-340 (GKWSSPLIDNP), and 344-354 (GIWKPRDIPNP). Glu-373 is a binding site for an alpha-D-glucoside. Asp-384 contacts Ca(2+). Asn-466 carries N-linked (GlcNAc...) asparagine glycosylation. The chain crosses the membrane as a helical span at residues 469 to 489 (IGVLISIVIVFLSLFFKLIFG). The Cytoplasmic segment spans residues 490–532 (GAKAKVEKKKPETAAETSTSEAKTEEKAEAVAAPRKRQTRRES). The disordered stretch occupies residues 493–532 (AKVEKKKPETAAETSTSEAKTEEKAEAVAAPRKRQTRRES). Positions 523-532 (PRKRQTRRES) are enriched in basic residues.

Belongs to the calreticulin family.

It localises to the endoplasmic reticulum membrane. In terms of biological role, calcium-binding protein that interacts with newly synthesized monoglucosylated glycoproteins in the endoplasmic reticulum. It may act in assisting protein assembly and/or in the retention within the ER of unassembled protein subunits. It seems to play a major role in the quality control apparatus of the ER by the retention of incorrectly folded proteins. The chain is Calnexin homolog 2 from Arabidopsis thaliana (Mouse-ear cress).